Consider the following 137-residue polypeptide: MVSSKWNMITELFLGAANSYAQMRGKITHYEIQHDGTIQHEFIDPSNTEEKAWDLEDNPEQQISVKGYANSCTLTVKDDSNEVELVPSGRYKQYMENQILSQTMQTGSMDSQKMMYLSIANLATLLLFGIIGLSIIT.

Residues 116–136 (YLSIANLATLLLFGIIGLSII) form a helical membrane-spanning segment.

The protein localises to the host membrane. This is an uncharacterized protein from His1 virus (isolate Australia/Victoria) (His1V).